We begin with the raw amino-acid sequence, 281 residues long: 3-hydroxyanthranilate 3,4-dioxygenase (281 aa).

A domain A (catalytic) region spans residues 1–162; that stretch reads MSGVTAIEIP…SNEFKTGKPG (162 aa). Arg-45 contacts O2. Fe cation contacts are provided by His-49, Glu-55, and His-93. Glu-55 is a substrate binding site. Positions 97 and 107 each coordinate substrate. Positions 163–179 are linker; it reads KGTFACNAPYEARWTDL. The tract at residues 180 to 281 is domain B; sequence PVPINRKEFI…GFAITIRMPA (102 aa).

This sequence belongs to the 3-HAO family. The cofactor is Fe(2+).

The protein resides in the cytoplasm. It catalyses the reaction 3-hydroxyanthranilate + O2 = (2Z,4Z)-2-amino-3-carboxymuconate 6-semialdehyde. It participates in cofactor biosynthesis; NAD(+) biosynthesis; quinolinate from L-kynurenine: step 3/3. Catalyzes the oxidative ring opening of 3-hydroxyanthranilate to 2-amino-3-carboxymuconate semialdehyde, which spontaneously cyclizes to quinolinate. The polypeptide is 3-hydroxyanthranilate 3,4-dioxygenase (haao-1) (Caenorhabditis elegans).